Here is a 200-residue protein sequence, read N- to C-terminus: MALSLTAINLPPPPLRDNLLSSQFQFRPNLLKFPKIPSSSSSFNGISLKTVTPNNNNNNPFACHVSTSQFGVQETNKSYAEAVAVGKHIRMSADKARRVIDTIRGRPYEETLMILELMPYRACETILKIVFSAGANASNNLGLSKSSLVISKAEVNEGRTMKRTRPRAQGRANRILKRTCHITITVKGLPAESVVEASSS.

This sequence belongs to the universal ribosomal protein uL22 family. As to quaternary structure, part of the 50S ribosomal subunit.

It localises to the plastid. The protein localises to the chloroplast. Its function is as follows. This protein binds specifically to 23S rRNA. The globular domain of the protein is located near the polypeptide exit tunnel on the outside of the subunit, while an extended beta-hairpin is found that lines the wall of the exit tunnel in the center of the 70S ribosome. This chain is Large ribosomal subunit protein uL22c (rpl22), found in Medicago sativa (Alfalfa).